A 282-amino-acid chain; its full sequence is Probable endonuclease 4 (282 aa).

Zn(2+) is bound by residues His69, His109, Glu145, Asp179, His182, His216, Asp229, His231, and Glu261.

Belongs to the AP endonuclease 2 family. It depends on Zn(2+) as a cofactor.

The enzyme catalyses Endonucleolytic cleavage to 5'-phosphooligonucleotide end-products.. Endonuclease IV plays a role in DNA repair. It cleaves phosphodiester bonds at apurinic or apyrimidinic (AP) sites, generating a 3'-hydroxyl group and a 5'-terminal sugar phosphate. The protein is Probable endonuclease 4 of Magnetococcus marinus (strain ATCC BAA-1437 / JCM 17883 / MC-1).